A 401-amino-acid chain; its full sequence is Proline-rich protein 30 (401 aa).

Polar residues predominate over residues 69-80; that stretch reads PGPHFSSDSNSD. Disordered regions lie at residues 69–93, 129–191, and 357–401; these read PGPH…PRSS, SSSL…RGAG, and QSPK…KSPS. 2 stretches are compositionally biased toward low complexity: residues 83-93 and 129-147; these read PPHSSSHPRSS and SSSL…QSPS. Polar residues-rich tracts occupy residues 148-186 and 357-368; these read RLQD…SIKS and QSPKPSQCSRSL.

The protein is Proline-rich protein 30 (Prr30) of Mus musculus (Mouse).